The primary structure comprises 147 residues: uncharacterized protein (147 aa).

It to M.jannaschii MJ1086 N-terminal region.

This is an uncharacterized protein from Methanocaldococcus jannaschii (strain ATCC 43067 / DSM 2661 / JAL-1 / JCM 10045 / NBRC 100440) (Methanococcus jannaschii).